Consider the following 303-residue polypeptide: Crk-like protein (303 aa).

In terms of domain architecture, SH2 spans 14-102 (WYMGPVTRQE…LDTTTLIEPA (89 aa)). The SH3 1 domain occupies 123 to 183 (ENLEYVRTLY…PVPYVEKLVR (61 aa)). Position 127 is a phosphotyrosine (Y127). A disordered region spans residues 184 to 203 (SSPHGKHGNRNSNSYGIPEP). At Y207 the chain carries Phosphotyrosine. The SH3 2 domain occupies 235–296 (NGPVFAKAIQ…PFTHVKIFDP (62 aa)).

The protein belongs to the CRK family. Interacts with DOCK2 and EPOR. Interacts with phosphorylated CBLB and IRS4. Interacts with INPP5D/SHIP1. Interacts with BCAR1/CAS and NEDD9/HEF1. Post-translationally, phosphorylated on tyrosine. Phosphorylation is prominent during early development, but decreases at later embryonic stages and in newborn mice.

In terms of biological role, may mediate the transduction of intracellular signals. The sequence is that of Crk-like protein (Crkl) from Mus musculus (Mouse).